Consider the following 309-residue polypeptide: Ferrochelatase (309 aa).

Residues histidine 185 and glutamate 262 each contribute to the Fe cation site.

It belongs to the ferrochelatase family.

It is found in the cytoplasm. It carries out the reaction heme b + 2 H(+) = protoporphyrin IX + Fe(2+). It participates in porphyrin-containing compound metabolism; protoheme biosynthesis; protoheme from protoporphyrin-IX: step 1/1. Catalyzes the ferrous insertion into protoporphyrin IX. The polypeptide is Ferrochelatase (Campylobacter jejuni subsp. jejuni serotype O:23/36 (strain 81-176)).